Here is a 319-residue protein sequence, read N- to C-terminus: Cobalamin biosynthesis protein CobD (319 aa).

A run of 4 helical transmembrane segments spans residues 56-76, 153-173, 204-224, and 290-310; these read GLWI…LWLM, VDGV…LAMA, LANW…AWFI, and IPLS…LFAL.

This sequence belongs to the CobD/CbiB family.

The protein localises to the cell membrane. It functions in the pathway cofactor biosynthesis; adenosylcobalamin biosynthesis. In terms of biological role, converts cobyric acid to cobinamide by the addition of aminopropanol on the F carboxylic group. The protein is Cobalamin biosynthesis protein CobD of Photorhabdus laumondii subsp. laumondii (strain DSM 15139 / CIP 105565 / TT01) (Photorhabdus luminescens subsp. laumondii).